A 410-amino-acid chain; its full sequence is Replication factor C large subunit (410 aa).

46-53 (GDPGTGKT) is a binding site for ATP.

It belongs to the activator 1 small subunits family. RfcL subfamily. Heteromultimer composed of small subunits (RfcS) and large subunits (RfcL).

Part of the RFC clamp loader complex which loads the PCNA sliding clamp onto DNA. This Picrophilus torridus (strain ATCC 700027 / DSM 9790 / JCM 10055 / NBRC 100828 / KAW 2/3) protein is Replication factor C large subunit.